Consider the following 1305-residue polypeptide: Serine protease EspC (1305 aa).

The first 53 residues, 1 to 53 (MNKIYALKYCHATGGLIAVSELASRVMKKAARGSLLALFNLSLYGAFLSASQA), serve as a signal peptide directing secretion. In terms of domain architecture, Peptidase S6 spans 55 to 297 (QLNIDNVWAR…SILNQYDENT (243 aa)). Residues His125, Asp153, and Ser256 each act as charge relay system in the active site. Residues 1039–1305 (DTQGDAGVWA…AINANFRYSF (267 aa)) enclose the Autotransporter domain.

In terms of processing, cleaved to release the mature protein from the outer membrane.

Its subcellular location is the periplasm. The protein resides in the secreted. It localises to the cell surface. The protein localises to the cell outer membrane. Inhibition of cytotoxic activity by phenylmethylsulfonyl fluoride. Its function is as follows. Serine protease with enterotoxic and cytotoxic activities. Cleaves fodrin, but does not cause its redistribution within epithelial cells. The exact role of EspC in EPEC pathogenesis is still unknown. The chain is Serine protease EspC (espC) from Escherichia coli O127:H6 (strain E2348/69 / EPEC).